A 453-amino-acid chain; its full sequence is Mogroside IIIx synthase (453 aa).

His21 functions as the Proton acceptor in the catalytic mechanism. Asp122 acts as the Charge relay in catalysis. Residues Ser273, Gln336, Trp354, Asn355, Ser356, Glu359, Asp375, and Gln376 each contribute to the UDP-alpha-D-glucose site.

This sequence belongs to the UDP-glycosyltransferase family. In terms of tissue distribution, highly expressed in mature fruits.

It carries out the reaction mogroside IIE + UDP-alpha-D-glucose = mogroside IIIX + UDP + H(+). It catalyses the reaction mogroside III + UDP-alpha-D-glucose = mogroside IV + UDP + H(+). The enzyme catalyses mogroside III + UDP-alpha-D-glucose = siamenoside I + UDP + H(+). The catalysed reaction is mogroside IV + UDP-alpha-D-glucose = mogroside V + UDP + H(+). Its pathway is secondary metabolite biosynthesis; terpenoid biosynthesis. Functionally, UDP-glycosyltransferase involved in the biosynthesis of cucurbitacin and mogroside tetracyclic triterpene natural products (e.g. siamenoside I and mogrosides IV, V and VI). Cucurbitacins have cytotoxic properties and exhibit deterrent taste as a defense barrier against herbivores. Mogrosides are nonsugar highly oxygenated compounds used as high-intensity zero-calorie sweeteners; they also possess pharmacological properties such as regulating immunity, lowering blood sugar and lipid levels, protecting the liver, and acting as antioxidants and antitumor agents. Catalyzes the branched glucosylations of mogroside II-E, mogroside III and mogroside IV. This chain is Mogroside IIIx synthase, found in Siraitia grosvenorii (Monk's fruit).